The sequence spans 430 residues: BSD domain-containing protein 1 (430 aa).

Residues S92 and S166 each carry the phosphoserine modification. A BSD domain is found at 146–198 (WLSQFCLEEKKGEISELLVGSPSIRALYTKMVPAAVSHSEFWHRYFYKVHQLE). Disordered regions lie at residues 247 to 298 (STFP…APEA) and 319 to 398 (LAVD…WEKD). Residues 276–291 (PSESSESISLVTQIAN) are compositionally biased toward polar residues. The segment covering 350 to 367 (PPARVETLREEAPTDLRV) has biased composition (basic and acidic residues). The residue at position 356 (T356) is a Phosphothreonine. Residues 371–390 (NSDSGKSTPSNNGKKGSSTD) are compositionally biased toward polar residues. Phosphoserine is present on residues S387, S388, and S418.

The polypeptide is BSD domain-containing protein 1 (BSDC1) (Homo sapiens (Human)).